A 250-amino-acid polypeptide reads, in one-letter code: Small ribosomal subunit protein uS2 (250 aa).

This sequence belongs to the universal ribosomal protein uS2 family.

This Paracidovorax citrulli (strain AAC00-1) (Acidovorax citrulli) protein is Small ribosomal subunit protein uS2.